A 239-amino-acid chain; its full sequence is Derlin-2 (239 aa).

Residues 1–56 (MAYQSLRLEYLQIPPVSRAYTTACVLTTAAVQLELITPFQLYFNPELIFKHFQIWR) are Cytoplasmic-facing. The chain crosses the membrane as a helical span at residues 57–77 (LITNFLFFGPVGFNFLFNMIF). The Lumenal segment spans residues 78–98 (LYRYCRMLEEGSFRGRTADFV). Residues 99–119 (FMFLFGGFLMTLFGLFVSLVF) form a helical membrane-spanning segment. Over 120 to 150 (LGQAFTIMLVYVWSRRNPYVRMNFFGLLNFQ) the chain is Cytoplasmic. A helical membrane pass occupies residues 151 to 171 (APFLPWVLMGFSLLLGNSIIV). Residue Asp172 is a topological domain, lumenal. A helical transmembrane segment spans residues 173–193 (LLGIAVGHIYFFLEDVFPNQP). Residues 194-239 (GGIRILKTPSILKAIFDTPDEDPNYNPLPEERPGGFAWGEGQRLGG) are Cytoplasmic-facing. The tract at residues 215–239 (DPNYNPLPEERPGGFAWGEGQRLGG) is disordered. The span at 229-239 (FAWGEGQRLGG) shows a compositional bias: gly residues.

This sequence belongs to the derlin family. As to quaternary structure, forms homo- and heterooligomers with DERL3 and, to a lesser extent, with DERL1. Interacts with the SEL1L/SYVN1 and VCP/SELENOS protein complexes. Mediates association between VCP and EDEM1, as well as that between VCP and the misfolded glycoproteins. Interacts with OS9. Interacts with SELENOK and SELENOS. Interacts with the signal recognition particle/SRP and the SRP receptor; in the process of endoplasmic reticulum stress-induced pre-emptive quality control. Interacts with CCDC47.

It localises to the endoplasmic reticulum membrane. In terms of biological role, functional component of endoplasmic reticulum-associated degradation (ERAD) for misfolded lumenal glycoproteins, but not that of misfolded nonglycoproteins. May act by forming a channel that allows the retrotranslocation of misfolded glycoproteins into the cytosol where they are ubiquitinated and degraded by the proteasome. May mediate the interaction between VCP and misfolded glycoproteins. May also be involved in endoplasmic reticulum stress-induced pre-emptive quality control, a mechanism that selectively attenuates the translocation of newly synthesized proteins into the endoplasmic reticulum and reroutes them to the cytosol for proteasomal degradation. The sequence is that of Derlin-2 from Pongo abelii (Sumatran orangutan).